We begin with the raw amino-acid sequence, 315 residues long: Capsid protein (315 aa).

Residues 1-60 (MPPKPAPGDNEGNASGSTPTPPPPPPARTAEEARLRLAEMEREREQEQLLEEMNSNTPAE) form a disordered region. The span at 29–47 (TAEEARLRLAEMEREREQE) shows a compositional bias: basic and acidic residues.

The protein belongs to the potexviruses coat protein family.

It is found in the virion. Its function is as follows. Required for genome encapsidation. Forms ribonucleoprotein complexes along with TGB1 helicase and viral RNA. This chain is Capsid protein, found in Chrysanthemum morifolium (Florist's daisy).